The sequence spans 173 residues: Putative MgpC-like protein MPN_092 (173 aa).

This sequence belongs to the MgpC family.

In Mycoplasma pneumoniae (strain ATCC 29342 / M129 / Subtype 1) (Mycoplasmoides pneumoniae), this protein is Putative MgpC-like protein MPN_092.